The sequence spans 297 residues: MAAWAPCRRWGWAAVSFGRHPGLSASLARKPPRAWWLSACRQKASLSFLNRSELPNLAYKRLKGKTPGIIFIPGYLSNMNGIKAVAVEEFCKSLGHAFIRFDYSGIGSSDGNLAECTVGKWRKDVLSILDDVAEGPQILVGSSLGGWLMLHAAIARPEKVIALIGIATAADGLVTQYHALPVETQKEIEMKGEWTLPSRYNKEGYFRIPYSFIKEAEHHCLLHSPIPVTCPVRLLHGMKDEIVPWQRSLQVADRIVSPDVDVILRKQGDHRMKEKADIHLLICTIDDLIDKLSTVVP.

The transit peptide at 1-43 (MAAWAPCRRWGWAAVSFGRHPGLSASLARKPPRAWWLSACRQK) directs the protein to the mitochondrion. Residues 69–196 (IIFIPGYLSN…EIEMKGEWTL (128 aa)) enclose the AB hydrolase-1 domain. Residues serine 143, aspartate 240, and histidine 270 each act as charge relay system in the active site.

It belongs to the AB hydrolase superfamily.

It localises to the mitochondrion. It carries out the reaction S-hexadecanoyl-L-cysteinyl-[protein] + H2O = L-cysteinyl-[protein] + hexadecanoate + H(+). The catalysed reaction is mycophenolic acid O-acyl-beta-D-glucuronide + H2O = mycophenolate + D-glucuronate + H(+). With respect to regulation, inhibited by palmostatin-B. Its function is as follows. Acts as an acyl-protein thioesterase that hydrolyzes fatty acids from acylated residues in proteins. Regulates the mitochondrial S-depalmitoylation of the nucleophilic active site residue of peroxiredoxin-5/PRDX5, a key antioxidant protein, therefore modulating mitochondrial antioxidant ability. Also catalyzes the deglucuronidation of mycophenolic acid acyl-glucuronide, an active metabolite of the immunosuppressant drug mycophenolate. The polypeptide is Palmitoyl-protein thioesterase ABHD10, mitochondrial (Mus musculus (Mouse)).